Consider the following 295-residue polypeptide: UDP-N-acetylenolpyruvoylglucosamine reductase (295 aa).

Positions 26–189 (VGGRADVLFK…VEAEFKGVNS (164 aa)) constitute an FAD-binding PCMH-type domain. R169 is an active-site residue. The active-site Proton donor is the C218. Residue E288 is part of the active site.

This sequence belongs to the MurB family. FAD is required as a cofactor.

Its subcellular location is the cytoplasm. It carries out the reaction UDP-N-acetyl-alpha-D-muramate + NADP(+) = UDP-N-acetyl-3-O-(1-carboxyvinyl)-alpha-D-glucosamine + NADPH + H(+). It functions in the pathway cell wall biogenesis; peptidoglycan biosynthesis. In terms of biological role, cell wall formation. This is UDP-N-acetylenolpyruvoylglucosamine reductase from Wolbachia pipientis wMel.